The following is a 577-amino-acid chain: Scoloptoxin SSD14 (577 aa).

Positions 1 to 25 (MGTSYRKLGYVLFLMLGMIVEEGIA) are cleaved as a signal peptide.

As to quaternary structure, heterodimer composed of subunits alpha and beta; probably disulfide-linked. In terms of tissue distribution, expressed by the venom gland.

Its subcellular location is the secreted. Dose-dependently induces human platelet aggregation on both plasma rich platelet and washed platelet (max. response at 3.2 ug/mL) and causes hemolysis against mouse and rabbit erythrocytes (35 and 65% respectively at 5 ug/mL). Does not show hemolytic activity against human erythrocytes (even at 100 ug/mL). The chain is Scoloptoxin SSD14 from Scolopendra dehaani (Thai centipede).